We begin with the raw amino-acid sequence, 532 residues long: KICSTOR complex protein ITFG2 (532 aa).

The stretch at phenylalanine 19–tyrosine 48 is one FG-GAP 1; atypical repeat. Residue serine 104 is modified to Phosphoserine. Residues asparagine 126–phenylalanine 155 form an FG-GAP 2; atypical repeat. The tract at residues proline 248–serine 271 is disordered.

As to quaternary structure, part of the KICSTOR complex composed of KPTN, ITFG2, KICS2 and SZT2. SZT2 probably serves as a link between the other three proteins in the KICSTOR complex and may mediate the direct interaction with the GATOR complex via GATOR1. The KICSTOR complex interacts directly with the GATOR1 complex and most probably indirectly with the GATOR2 complex in an amino acid-independent manner.

It is found in the lysosome membrane. Its function is as follows. As part of the KICSTOR complex functions in the amino acid-sensing branch of the TORC1 signaling pathway. Recruits, in an amino acid-independent manner, the GATOR1 complex to the lysosomal membranes and allows its interaction with GATOR2 and the RAG GTPases. Functions upstream of the RAG GTPases and is required to negatively regulate mTORC1 signaling in absence of amino acids. In absence of the KICSTOR complex mTORC1 is constitutively localized to the lysosome and activated. The KICSTOR complex is also probably involved in the regulation of mTORC1 by glucose. The chain is KICSTOR complex protein ITFG2 from Bos taurus (Bovine).